A 254-amino-acid polypeptide reads, in one-letter code: MTANQTKKSVPSFTSDIRQGVSNEGCLVLYSGGQDSATCLAWALEHFDRVETIGFDYGQRHKVELECRENLKQKLIQNFPDWAAHLGEDHMLDLAVLHQVSDCALTRETEIAFGEDGIPNSFVPGRNLLFFTFAATIAYRRGLRHIVGGMCETDYSGYPDCRDDTIKALQVAINLGLERRLVLHTPLMWLDKASTWQMAEEVGGKELVEIIRQESHSCYLGEREILHDWGYGCGHCPACELRAAGWESYQKSRS.

An ATP-binding site is contributed by 30–40 (YSGGQDSATCL). Zn(2+) contacts are provided by Cys-218, Cys-233, Cys-236, and Cys-239.

It belongs to the QueC family. Requires Zn(2+) as cofactor.

The enzyme catalyses 7-carboxy-7-deazaguanine + NH4(+) + ATP = 7-cyano-7-deazaguanine + ADP + phosphate + H2O + H(+). It participates in purine metabolism; 7-cyano-7-deazaguanine biosynthesis. Catalyzes the ATP-dependent conversion of 7-carboxy-7-deazaguanine (CDG) to 7-cyano-7-deazaguanine (preQ(0)). This is 7-cyano-7-deazaguanine synthase from Zymomonas mobilis subsp. mobilis (strain ATCC 31821 / ZM4 / CP4).